Consider the following 600-residue polypeptide: Tripeptidyl-peptidase 1 (600 aa).

The signal sequence occupies residues 1–22 (MNIKFNLIIIILFILFISNVNC). A propeptide spans 23-220 (KKIKNKKHLT…GGGGKVNGIG (198 aa)) (removed in mature form). N-linked (GlcNAc...) asparagine glycosylation is found at Asn-91, Asn-259, and Asn-266. The Peptidase S53 domain maps to 248–600 (YLSPDLIRKE…FDELVKYCLE (353 aa)). Catalysis depends on charge relay system residues Glu-318 and Asp-322. A disulfide bridge links Cys-411 with Cys-570. 2 N-linked (GlcNAc...) asparagine glycosylation sites follow: Asn-475 and Asn-483. Ser-514 serves as the catalytic Charge relay system. Ca(2+) is bound by residues Asp-559, Ile-560, Gly-579, and Asp-581.

As to quaternary structure, monomer. Requires Ca(2+) as cofactor. Post-translationally, activated by autocatalytic proteolytical processing upon acidification. N-glycosylation is required for processing and activity.

The protein localises to the secreted. It carries out the reaction Release of an N-terminal tripeptide from a polypeptide, but also has endopeptidase activity.. Serine protease with tripeptidyl-peptidase I activity. This chain is Tripeptidyl-peptidase 1 (tpp1), found in Dictyostelium discoideum (Social amoeba).